Reading from the N-terminus, the 314-residue chain is Olfactory receptor 8D4 (314 aa).

Residues 1–25 (MGVKNHSTVTEFLLSGLTEQAELQL) lie on the Extracellular side of the membrane. N5 carries an N-linked (GlcNAc...) asparagine glycan. A helical transmembrane segment spans residues 26-46 (PLFCLFLGIYTVTVVGNLSMI). Residues 47–54 (SIIRLNRQ) are Cytoplasmic-facing. The chain crosses the membrane as a helical span at residues 55–75 (LHTPMYYFLSSLSFLDFCYSS). Topologically, residues 76 to 99 (VITPKMLSGFLCRDRSISYSGCMI) are extracellular. A disulfide bridge connects residues C97 and C189. Residues 100–120 (QLFFFCVCVISECYMLAAMAC) traverse the membrane as a helical segment. Residues 121-139 (DRYVAICSPLLYRVIMSPR) lie on the Cytoplasmic side of the membrane. A helical transmembrane segment spans residues 140–160 (VCSLLVAAVFSVGFTDAVIHG). Residues 161–197 (GCILRLSFCGSNIIKHYFCDIVPLIKLSCSSTYIDEL) are Extracellular-facing. The chain crosses the membrane as a helical span at residues 198–217 (LIFVIGGFNMVATSLTIIIS). Residues 218 to 237 (YAFILTSILRIHSKKGRCKA) lie on the Cytoplasmic side of the membrane. A helical membrane pass occupies residues 238–258 (FSTCSSHLTAVLMFYGSLMSM). Over 259 to 271 (YLKPASSSSLTQE) the chain is Extracellular. The helical transmembrane segment at 272–292 (KVSSVFYTTVILMLNPLIYSL) threads the bilayer. The Cytoplasmic portion of the chain corresponds to 293-314 (RNNEVRNALMKLLRRKISLSPG).

It belongs to the G-protein coupled receptor 1 family.

The protein localises to the cell membrane. Functionally, odorant receptor. The protein is Olfactory receptor 8D4 (OR8D4) of Homo sapiens (Human).